A 143-amino-acid chain; its full sequence is Larval cuticle protein LCP-17 (143 aa).

An N-terminal signal peptide occupies residues 1-16 (MKFLIVLAVAVACASA). In terms of domain architecture, Chitin-binding type R&amp;R spans 41 to 110 (EGHFQFNYET…PQGSHLPTPH (70 aa)).

Functionally, component of the cuticle of the larva of Bombyx mori. This chain is Larval cuticle protein LCP-17 (LCP17), found in Bombyx mori (Silk moth).